The primary structure comprises 376 residues: MREWKIIDSTLREGEQFEKANFSTQDKVEIAKALDEFGIEYIEVTTPVASPQSRKDAEVLASLGLKAKVVTHIQCRLDAAKVAVETGVQGIDLLFGTSKYLRAAHGRDIPRIIEEAKEVIAYIREAAPHVEVRFSAEDTFRSEEQDLLAVYEAVAPYVDRVGLADTVGVATPRQVYALVREVRRVVGPRVDIEFHGHNDTGCAIANAYEAIEAGATHVDTTILGIGERNGITPLGGFLARMYTLQPEYVRRKYKLEMLPELDRMVARMVGVEIPFNNYITGETAFSHKAGMHLKAIYINPEAYEPYPPEVFGVKRKLIIASRLTGRHAIKARAEELGLHYGEEELHRVTQHIKALADRGQLTLEELDRILREWITA.

The 256-residue stretch at 4-259 folds into the Pyruvate carboxyltransferase domain; it reads WKIIDSTLRE…RRKYKLEMLP (256 aa). Arg-12 is a 2-oxoglutarate binding site. Mg(2+) is bound at residue Glu-13. His-72 is a binding site for 2-oxoglutarate. Asp-92 is an L-lysine binding site. Position 133 (Arg-133) interacts with 2-oxoglutarate. L-lysine-binding residues include Ser-135 and Thr-166. 2-oxoglutarate is bound at residue Thr-166. Positions 195 and 197 each coordinate Mg(2+). The active-site Proton acceptor is His-292.

The protein belongs to the alpha-IPM synthase/homocitrate synthase family. Homocitrate synthase LYS20/LYS21 subfamily. As to quaternary structure, exists in an equilibrium between monomer and homodimer. It depends on Mg(2+) as a cofactor. Mn(2+) serves as cofactor.

It localises to the cytoplasm. It carries out the reaction acetyl-CoA + 2-oxoglutarate + H2O = (2R)-homocitrate + CoA + H(+). It catalyses the reaction oxaloacetate + acetyl-CoA + H2O = citrate + CoA + H(+). It functions in the pathway amino-acid biosynthesis; L-lysine biosynthesis via AAA pathway; L-alpha-aminoadipate from 2-oxoglutarate: step 1/5. With respect to regulation, is highly and competitively inhibited by lysine that binds to the active site and competes with 2-oxoglutarate. Is also slightly inhibited by arginine and 2-aminoethylcysteine. Its function is as follows. Catalyzes the aldol-type condensation of 2-oxoglutarate with acetyl-CoA to yield homocitrate. Carries out the first step of the alpha-aminoadipate (AAA) lysine biosynthesis pathway. To a lesser extent, can also use oxaloacetate in place of 2-oxoglutarate, leading to citrate. Does not display 2-isopropylmalate synthase activity since it cannot use 2-oxoisovalerate. This chain is Homocitrate synthase, found in Thermus thermophilus (strain ATCC BAA-163 / DSM 7039 / HB27).